The sequence spans 231 residues: S-norcoclaurine synthase 2 (231 aa).

107-109 (YKE) serves as a coordination point for dopamine. The active-site Proton donor is K121. Residue D140 participates in (4-hydroxyphenyl)acetaldehyde binding. Residues 210-230 (LLLCLIICLVIAGGMFVAGVP) form a helical membrane-spanning segment.

It belongs to the BetVI family. As to expression, expressed in roots, stems and leaves. Detected in flower buds and germinating seeds. Low expression in carpels. Restricted to sieve elements of the phloem adjacent or proximal to laticifers.

It localises to the endoplasmic reticulum membrane. Its subcellular location is the vacuole membrane. The catalysed reaction is (4-hydroxyphenyl)acetaldehyde + dopamine = (S)-norcoclaurine + H2O. The protein operates within alkaloid biosynthesis; (S)-reticuline biosynthesis. With respect to regulation, activity doubles within 5 hours of elicitor treatment and continues to increase for at least 80 hours. In terms of biological role, involved in the biosynthesis of (S)-coclaurine, the common precursor of all benzylisoquinoline alkaloids such as morphine, sanguinarine, codeine or papaverine. Condenses dopamine and 4-hydroxyphenylacetaldehyde. The protein is S-norcoclaurine synthase 2 of Papaver somniferum (Opium poppy).